Consider the following 229-residue polypeptide: ATP synthase subunit a 1 (229 aa).

6 helical membrane passes run 25 to 45, 86 to 106, 111 to 131, 142 to 162, 181 to 201, and 202 to 222; these read ADAV…SFLA, VATV…PGFF, NINT…VVGI, FCGP…IGHL, LVLI…MMLM, and GVLV…IYIQ.

The protein belongs to the ATPase A chain family. In terms of assembly, F-type ATPases have 2 components, CF(1) - the catalytic core - and CF(0) - the membrane proton channel. CF(1) has five subunits: alpha(3), beta(3), gamma(1), delta(1), epsilon(1). CF(0) has three main subunits: a(1), b(2) and c(9-12). The alpha and beta chains form an alternating ring which encloses part of the gamma chain. CF(1) is attached to CF(0) by a central stalk formed by the gamma and epsilon chains, while a peripheral stalk is formed by the delta and b chains.

Its subcellular location is the cell inner membrane. Functionally, key component of the proton channel; it plays a direct role in the translocation of protons across the membrane. The sequence is that of ATP synthase subunit a 1 from Pelobacter propionicus (strain DSM 2379 / NBRC 103807 / OttBd1).